Consider the following 447-residue polypeptide: N-succinylarginine dihydrolase (447 aa).

Substrate contacts are provided by residues 19-28 (AGLSFGNEAS), Asn110, and 137-138 (HR). Glu174 is a catalytic residue. Arg214 contacts substrate. The active site involves His250. Substrate is bound by residues Asp252 and Asn365. Cys371 acts as the Nucleophile in catalysis.

This sequence belongs to the succinylarginine dihydrolase family. As to quaternary structure, homodimer.

It catalyses the reaction N(2)-succinyl-L-arginine + 2 H2O + 2 H(+) = N(2)-succinyl-L-ornithine + 2 NH4(+) + CO2. It functions in the pathway amino-acid degradation; L-arginine degradation via AST pathway; L-glutamate and succinate from L-arginine: step 2/5. Functionally, catalyzes the hydrolysis of N(2)-succinylarginine into N(2)-succinylornithine, ammonia and CO(2). This is N-succinylarginine dihydrolase from Acinetobacter baumannii (strain ATCC 17978 / DSM 105126 / CIP 53.77 / LMG 1025 / NCDC KC755 / 5377).